Here is a 152-residue protein sequence, read N- to C-terminus: Transcription factor ATOH7 (152 aa).

The bHLH domain maps to 40–92; sequence RRRLAANARERRRMQGLNTAFDRLRRVVPQWGQDKKLSKYETLQMALSYIMAL.

As to quaternary structure, forms a heterodimer with TCF3 isoform E47; interaction may be required for DNA-binding in certain situations.

Its subcellular location is the nucleus. The protein resides in the perikaryon. The protein localises to the cell projection. It localises to the axon. Transcription factor that binds to DNA at the consensus sequence 5'-CAG[GC]TG-3'. Dimerization with TCF3 isoform E47 may be required in certain situations. Binds to gene promoters and enhancer elements, and thereby regulates a transcriptional program of retinal ganglion cell (RGC) determinant genes. Although the exact mechanism is not certain, retinal transcription regulation by ATOH7 has a role in RGC determination and survival, photoreceptor population development, targeting of RGC axons to the optic nerve and development of the retino-hypothalamic tract. Binds to its own promoter and enhancer sequences, suggesting autoregulation of ATOH7 transcription. Required for retinal circadian rhythm photoentrainment. Plays a role in brainstem auditory signaling and binaural processing. The protein is Transcription factor ATOH7 of Homo sapiens (Human).